Consider the following 143-residue polypeptide: Large ribosomal subunit protein uL15 (143 aa).

Residues 1–59 (MELNGIKPADGAKHYKRRVGRGIGSGIGKTAGRGHKGQKSRAGGYHKVGFEGGQMPMQR) are disordered. The span at 21-31 (RGIGSGIGKTA) shows a compositional bias: gly residues.

Belongs to the universal ribosomal protein uL15 family. As to quaternary structure, part of the 50S ribosomal subunit.

Its function is as follows. Binds to the 23S rRNA. The polypeptide is Large ribosomal subunit protein uL15 (Albidiferax ferrireducens (strain ATCC BAA-621 / DSM 15236 / T118) (Rhodoferax ferrireducens)).